The primary structure comprises 413 residues: Argininosuccinate synthase (413 aa).

8-16 (AYSGGLDTS) serves as a coordination point for ATP. L-citrulline is bound at residue Y87. ATP is bound at residue G117. L-aspartate-binding residues include T119, N123, and D124. N123 contacts L-citrulline. 4 residues coordinate L-citrulline: R127, S175, E259, and Y271.

This sequence belongs to the argininosuccinate synthase family. Type 1 subfamily. In terms of assembly, homotetramer.

Its subcellular location is the cytoplasm. The enzyme catalyses L-citrulline + L-aspartate + ATP = 2-(N(omega)-L-arginino)succinate + AMP + diphosphate + H(+). The protein operates within amino-acid biosynthesis; L-arginine biosynthesis; L-arginine from L-ornithine and carbamoyl phosphate: step 2/3. The sequence is that of Argininosuccinate synthase from Micrococcus luteus (strain ATCC 4698 / DSM 20030 / JCM 1464 / CCM 169 / CCUG 5858 / IAM 1056 / NBRC 3333 / NCIMB 9278 / NCTC 2665 / VKM Ac-2230) (Micrococcus lysodeikticus).